The chain runs to 1342 residues: DNA-directed RNA polymerase subunit beta (1342 aa).

This sequence belongs to the RNA polymerase beta chain family. The RNAP catalytic core consists of 2 alpha, 1 beta, 1 beta' and 1 omega subunit. When a sigma factor is associated with the core the holoenzyme is formed, which can initiate transcription.

The enzyme catalyses RNA(n) + a ribonucleoside 5'-triphosphate = RNA(n+1) + diphosphate. Functionally, DNA-dependent RNA polymerase catalyzes the transcription of DNA into RNA using the four ribonucleoside triphosphates as substrates. The chain is DNA-directed RNA polymerase subunit beta from Yersinia pseudotuberculosis serotype O:1b (strain IP 31758).